The chain runs to 221 residues: MSETVGNGENFPAVAARDDRLVWVDLEMTGLDLERHVIVEVAALVTDANLNILGEGVDLVVHATDEELARMDDFVTRMHDSSGLTPLIRASTVSLKDAEDAVLALIEEHCDPAHPAPLAGNSIATDRAFIREQMPRLDAALHYRMVDVSSVKELARRWCPRVYYKQPTKGLAHRALADIVESIRELDYYRRSFFVADPGPTSAQCEADAETSVARFAHYLE.

Residues 21-186 (LVWVDLEMTG…ADIVESIREL (166 aa)) enclose the Exonuclease domain. Tyr-143 is an active-site residue.

It belongs to the oligoribonuclease family.

Its subcellular location is the cytoplasm. 3'-to-5' exoribonuclease specific for small oligoribonucleotides. The protein is Oligoribonuclease of Corynebacterium efficiens (strain DSM 44549 / YS-314 / AJ 12310 / JCM 11189 / NBRC 100395).